Here is a 203-residue protein sequence, read N- to C-terminus: Holliday junction branch migration complex subunit RuvA (203 aa).

The tract at residues methionine 1–asparagine 64 is domain I. The interval asparagine 65–proline 142 is domain II. The interval alanine 143–proline 154 is flexible linker. The interval alanine 155–leucine 203 is domain III.

The protein belongs to the RuvA family. As to quaternary structure, homotetramer. Forms an RuvA(8)-RuvB(12)-Holliday junction (HJ) complex. HJ DNA is sandwiched between 2 RuvA tetramers; dsDNA enters through RuvA and exits via RuvB. An RuvB hexamer assembles on each DNA strand where it exits the tetramer. Each RuvB hexamer is contacted by two RuvA subunits (via domain III) on 2 adjacent RuvB subunits; this complex drives branch migration. In the full resolvosome a probable DNA-RuvA(4)-RuvB(12)-RuvC(2) complex forms which resolves the HJ.

It localises to the cytoplasm. Functionally, the RuvA-RuvB-RuvC complex processes Holliday junction (HJ) DNA during genetic recombination and DNA repair, while the RuvA-RuvB complex plays an important role in the rescue of blocked DNA replication forks via replication fork reversal (RFR). RuvA specifically binds to HJ cruciform DNA, conferring on it an open structure. The RuvB hexamer acts as an ATP-dependent pump, pulling dsDNA into and through the RuvAB complex. HJ branch migration allows RuvC to scan DNA until it finds its consensus sequence, where it cleaves and resolves the cruciform DNA. The sequence is that of Holliday junction branch migration complex subunit RuvA from Escherichia coli O9:H4 (strain HS).